The following is a 95-amino-acid chain: Large ribosomal subunit protein bL28 (95 aa).

Belongs to the bacterial ribosomal protein bL28 family.

In Zymomonas mobilis subsp. mobilis (strain ATCC 31821 / ZM4 / CP4), this protein is Large ribosomal subunit protein bL28.